An 852-amino-acid polypeptide reads, in one-letter code: Aconitate hydratase B (852 aa).

Substrate contacts are provided by residues arginine 194, 237–239 (SSR), 405–407 (QDT), and serine 489. Cysteine 708, cysteine 766, and cysteine 769 together coordinate [4Fe-4S] cluster. Residues arginine 788 and arginine 793 each coordinate substrate.

The protein belongs to the aconitase/IPM isomerase family. In terms of assembly, monomer. [4Fe-4S] cluster is required as a cofactor.

It catalyses the reaction citrate = D-threo-isocitrate. It carries out the reaction (2S,3R)-3-hydroxybutane-1,2,3-tricarboxylate = 2-methyl-cis-aconitate + H2O. The protein operates within carbohydrate metabolism; tricarboxylic acid cycle; isocitrate from oxaloacetate: step 2/2. It functions in the pathway organic acid metabolism; propanoate degradation. Involved in the catabolism of short chain fatty acids (SCFA) via the tricarboxylic acid (TCA)(acetyl degradation route) and probably via the 2-methylcitrate cycle I (propionate degradation route). Catalyzes the reversible isomerization of citrate to isocitrate via cis-aconitate. Catalyzes the hydration of 2-methyl-cis-aconitate to yield (2R,3S)-2-methylisocitrate. The apo form of AcnB functions as a RNA-binding regulatory protein. The sequence is that of Aconitate hydratase B (acnB) from Helicobacter pylori (strain J99 / ATCC 700824) (Campylobacter pylori J99).